A 155-amino-acid polypeptide reads, in one-letter code: Large ribosomal subunit protein eL24 (155 aa).

Residues 119-155 (VKAAKKAAAPAPAKKSAPKQKAAKVTQKAAPRVGGKR) form a disordered region. Over residues 124–133 (KAAAPAPAKK) the composition is skewed to low complexity.

Belongs to the eukaryotic ribosomal protein eL24 family.

The chain is Large ribosomal subunit protein eL24 (RpL24) from Drosophila melanogaster (Fruit fly).